The following is a 259-amino-acid chain: Protein unc-50 homolog (259 aa).

At methionine 1 the chain carries N-acetylmethionine. Residues 1–82 (MLPSTSLSSS…TKDQWARDDP (82 aa)) lie on the Cytoplasmic side of the membrane. Residue serine 6 is modified to Phosphoserine. The helical transmembrane segment at 83 to 103 (AFLVLLSIWLCVSTIGFGFVL) threads the bilayer. Residues 104–112 (DMGFFETIK) lie on the Lumenal side of the membrane. A helical transmembrane segment spans residues 113-133 (LLLWVVFIDCVGVGLLISTLM). The Cytoplasmic portion of the chain corresponds to 134 to 163 (WFVSNKYLVKRQSRDYDVEWGYAFDVHLNA). The chain crosses the membrane as a helical span at residues 164–184 (FYPLLVILHFIQLFFINHVIL). Topologically, residues 185-187 (TDT) are lumenal. Residues 188–208 (FIGYLVGNTLWLIAVGYYIYV) traverse the membrane as a helical segment. Over 209 to 222 (TFLGYSALPFLKNT) the chain is Cytoplasmic. A helical membrane pass occupies residues 223–243 (VILLYPFAPLMVLYGLSLALG). The Lumenal portion of the chain corresponds to 244–259 (WNFTHTLCSFYKYRVK).

It belongs to the unc-50 family. As to expression, highly expressed in periodontal ligament and bone marrow, but not in gingival fibroblasts.

The protein resides in the nucleus inner membrane. Its subcellular location is the golgi apparatus membrane. Involved in the cell surface expression of neuronal nicotinic receptors. Binds RNA. In Mus musculus (Mouse), this protein is Protein unc-50 homolog (Unc50).